The chain runs to 46 residues: uncharacterized protein (46 aa).

It localises to the plastid. It is found in the chloroplast. This is an uncharacterized protein from Trieres chinensis (Marine centric diatom).